Here is a 1101-residue protein sequence, read N- to C-terminus: Carbamoyl phosphate synthase large chain (1101 aa).

The interval methionine 1 to glutamate 402 is carboxyphosphate synthetic domain. Residues arginine 129, arginine 169, glycine 175, glycine 176, glutamate 208, isoleucine 210, glutamate 215, glycine 241, valine 242, histidine 243, glutamine 285, and glutamate 299 each coordinate ATP. Positions lysine 133–leucine 328 constitute an ATP-grasp 1 domain. Glutamine 285, glutamate 299, and asparagine 301 together coordinate Mg(2+). Glutamine 285, glutamate 299, and asparagine 301 together coordinate Mn(2+). The tract at residues glutamine 403 to threonine 544 is oligomerization domain. The tract at residues glutamate 545–glycine 947 is carbamoyl phosphate synthetic domain. Residues alanine 675–valine 866 enclose the ATP-grasp 2 domain. ATP-binding residues include arginine 711, arginine 750, leucine 752, glutamate 757, glycine 782, isoleucine 783, histidine 784, serine 785, glutamine 825, and glutamate 837. Residues glutamine 825, glutamate 837, and asparagine 839 each coordinate Mg(2+). Mn(2+) is bound by residues glutamine 825, glutamate 837, and asparagine 839. In terms of domain architecture, MGS-like spans glycine 948–alanine 1093. The interval glycine 948 to alanine 1101 is allosteric domain.

This sequence belongs to the CarB family. In terms of assembly, composed of two chains; the small (or glutamine) chain promotes the hydrolysis of glutamine to ammonia, which is used by the large (or ammonia) chain to synthesize carbamoyl phosphate. Tetramer of heterodimers (alpha,beta)4. Requires Mg(2+) as cofactor. It depends on Mn(2+) as a cofactor.

It catalyses the reaction hydrogencarbonate + L-glutamine + 2 ATP + H2O = carbamoyl phosphate + L-glutamate + 2 ADP + phosphate + 2 H(+). The enzyme catalyses hydrogencarbonate + NH4(+) + 2 ATP = carbamoyl phosphate + 2 ADP + phosphate + 2 H(+). It functions in the pathway amino-acid biosynthesis; L-arginine biosynthesis; carbamoyl phosphate from bicarbonate: step 1/1. Its pathway is pyrimidine metabolism; UMP biosynthesis via de novo pathway; (S)-dihydroorotate from bicarbonate: step 1/3. Functionally, large subunit of the glutamine-dependent carbamoyl phosphate synthetase (CPSase). CPSase catalyzes the formation of carbamoyl phosphate from the ammonia moiety of glutamine, carbonate, and phosphate donated by ATP, constituting the first step of 2 biosynthetic pathways, one leading to arginine and/or urea and the other to pyrimidine nucleotides. The large subunit (synthetase) binds the substrates ammonia (free or transferred from glutamine from the small subunit), hydrogencarbonate and ATP and carries out an ATP-coupled ligase reaction, activating hydrogencarbonate by forming carboxy phosphate which reacts with ammonia to form carbamoyl phosphate. This Micrococcus luteus (strain ATCC 4698 / DSM 20030 / JCM 1464 / CCM 169 / CCUG 5858 / IAM 1056 / NBRC 3333 / NCIMB 9278 / NCTC 2665 / VKM Ac-2230) (Micrococcus lysodeikticus) protein is Carbamoyl phosphate synthase large chain.